Here is a 320-residue protein sequence, read N- to C-terminus: Acetyl-coenzyme A carboxylase carboxyl transferase subunit alpha (320 aa).

The CoA carboxyltransferase C-terminal domain occupies 42 to 295 (IEEKAVQALN…GDAIAAAFAE (254 aa)).

It belongs to the AccA family. As to quaternary structure, acetyl-CoA carboxylase is a heterohexamer composed of biotin carboxyl carrier protein (AccB), biotin carboxylase (AccC) and two subunits each of ACCase subunit alpha (AccA) and ACCase subunit beta (AccD).

It is found in the cytoplasm. It carries out the reaction N(6)-carboxybiotinyl-L-lysyl-[protein] + acetyl-CoA = N(6)-biotinyl-L-lysyl-[protein] + malonyl-CoA. Its pathway is lipid metabolism; malonyl-CoA biosynthesis; malonyl-CoA from acetyl-CoA: step 1/1. Component of the acetyl coenzyme A carboxylase (ACC) complex. First, biotin carboxylase catalyzes the carboxylation of biotin on its carrier protein (BCCP) and then the CO(2) group is transferred by the carboxyltransferase to acetyl-CoA to form malonyl-CoA. This is Acetyl-coenzyme A carboxylase carboxyl transferase subunit alpha from Rhodopseudomonas palustris (strain HaA2).